The sequence spans 801 residues: Heavy metal tolerance factor 1 (801 aa).

Residues 1 to 24 (MGFSPFLDECRAEGLWPIGPSCNK) lie on the Lumenal side of the membrane. Residues 25-45 (IISFGVYTFFIVVNFIVLCIP) form a helical membrane-spanning segment. The Cytoplasmic segment spans residues 46 to 75 (NSNSANNNYRRMTDDDASSTSKLTISKILS). The helical transmembrane segment at 76-96 (ICTIFAVICQSIFYFCFTFYF) threads the bilayer. The Lumenal portion of the chain corresponds to 97–101 (HPYTH). Residues 102 to 122 (LLLAFCVSKLFFWILSLCSFS) form a helical membrane-spanning segment. Topologically, residues 123-129 (KWRNQPS) are cytoplasmic. The helical transmembrane segment at 130–150 (TPISLAFAFSAALLIHCIPLT) threads the bilayer. The Lumenal portion of the chain corresponds to 151-167 (DWKKYFEPTSKNRGDLT). A helical transmembrane segment spans residues 168–188 (FYIIELALVTVVFFFTIVTGL). Residues 189–226 (FNFSGCSSRESAWNNLSKKVVTVAPYIWPTKSISLQLR) lie on the Cytoplasmic side of the membrane. The chain crosses the membrane as a helical span at residues 227–247 (VVFCLFLLIIGRLINVSLPIL). The region spanning 227 to 516 (VVFCLFLLII…FGTIYRVIQK (290 aa)) is the ABC transmembrane type-1 domain. The Lumenal portion of the chain corresponds to 248-264 (SKWIVDELATPDTFQYS). The helical transmembrane segment at 265–285 (LLFLATFLKFLQGNGAMGGFL) threads the bilayer. The Cytoplasmic segment spans residues 286–341 (NTVRTYLWIPIQQYTTRELEVELFKHLHSLSLRWHLSRKTGQVLRVMDRGTSSVNN). Residues 342–364 (ILNYILFNVVPTIADIVIAVIFF) form a helical membrane-spanning segment. At 365-371 (FSAFNAY) the chain is on the lumenal side. Residues 372-390 (FGLIVFGTMALYLTVTISI) form a helical membrane-spanning segment. Over 391–461 (TEWRTQYIRE…SLAFLNCLQN (71 aa)) the chain is Cytoplasmic. A helical membrane pass occupies residues 462–482 (AIIGIGMIGGSVFVVYMIVHE). Over 483–489 (KTLTVGD) the chain is Lumenal. A helical transmembrane segment spans residues 490 to 510 (YVLFTTYLLQLYTPLNFFGTI). At 511–801 (YRVIQKAFVD…KSIELGEELP (291 aa)) the chain is on the cytoplasmic side. One can recognise an ABC transporter domain in the interval 550–784 (ISVKNLTFEY…QGTYASMWEA (235 aa)). 583–590 (GSSGSGKS) is an ATP binding site.

This sequence belongs to the ABC transporter superfamily. ABCB family. Heavy Metal importer (TC 3.A.1.210) subfamily. As to expression, expressed in coelomocytes, as well as in head and tail neurons, and in the intestinal cells.

The protein resides in the vacuole membrane. It localises to the early endosome. It is found in the late endosome. The protein localises to the recycling endosome. Functionally, may play a pivotal role in the detoxification of heavy metals such as cadmium but do not depend exclusively on phytochelatins (PC) synthesis. This is Heavy metal tolerance factor 1 from Caenorhabditis elegans.